The sequence spans 405 residues: Phosphatidylinositol 5-phosphate 4-kinase type-2 alpha (405 aa).

A2 carries the N-acetylalanine modification. A Phosphothreonine modification is found at T3. S14 carries the phosphoserine modification. Residues 33-405 (ASDPLLSVLM…RFLDFIGHIL (373 aa)) form the PIPK domain. The interval 59–65 (VMLMPDD) is required for interaction with PIP5K1A. 2 positions are modified to N6-acetyllysine: K89 and K145. The interval 288-328 (QEEVECEENDGEEEGESDSTHPIGTPPDSPGNTLNSSPPLA) is disordered. The segment covering 289 to 304 (EEVECEENDGEEEGES) has biased composition (acidic residues).

As to quaternary structure, homodimer. Interacts with PIP4K2B; the interaction may regulate localization to the nucleus. Probably interacts with PIP5K1A; the interaction inhibits PIP5K1A kinase activity. Phosphorylated in tyrosines. Phosphorylation is induced by light and increases kinase activity. As to expression, detected in rod photoreceptor cells.

The protein resides in the cell membrane. The protein localises to the nucleus. It localises to the lysosome. Its subcellular location is the cytoplasm. It is found in the photoreceptor inner segment. The protein resides in the cell projection. The protein localises to the cilium. It localises to the photoreceptor outer segment. The catalysed reaction is a 1,2-diacyl-sn-glycero-3-phospho-(1D-myo-inositol-5-phosphate) + ATP = a 1,2-diacyl-sn-glycero-3-phospho-(1D-myo-inositol-4,5-bisphosphate) + ADP + H(+). It catalyses the reaction 1,2-dihexadecanoyl-sn-glycero-3-phospho-(1D-myo-inositol-5-phosphate) + ATP = 1,2-dihexadecanoyl-sn-glycero-3-phospho-(1D-myo-inositol-4,5-bisphosphate) + ADP + H(+). The enzyme catalyses 1,2-dihexadecanoyl-sn-glycero-3-phospho-(1D-myo-inositol-5-phosphate) + GTP = 1,2-dihexadecanoyl-sn-glycero-3-phospho-(1D-myo-inositol-4,5-bisphosphate) + GDP + H(+). Its activity is regulated as follows. In rod outer segments, activated by light. Catalyzes the phosphorylation of phosphatidylinositol 5-phosphate (PtdIns5P) on the fourth hydroxyl of the myo-inositol ring, to form phosphatidylinositol 4,5-bisphosphate (PtdIns(4,5)P2). Has both ATP- and GTP-dependent kinase activities. May exert its function by regulating the levels of PtdIns5P, which functions in the cytosol by increasing AKT activity and in the nucleus signals through ING2. May regulate the pool of cytosolic PtdIns5P in response to the activation of tyrosine phosphorylation. Required for lysosome-peroxisome membrane contacts and intracellular cholesterol transport through modulating peroxisomal PtdIns(4,5)P2 level. In collaboration with PIP4K2B, has a role in mediating autophagy in times of nutrient stress. Required for autophagosome-lysosome fusion and the regulation of cellular lipid metabolism. Negatively regulates insulin signaling through a catalytic-independent mechanism. PIP4Ks interact with PIP5Ks and suppress PIP5K-mediated PtdIns(4,5)P2 synthesis and insulin-dependent conversion to PtdIns(3,4,5)P3. May be involved in thrombopoiesis, and the terminal maturation of megakaryocytes and regulation of their size. The chain is Phosphatidylinositol 5-phosphate 4-kinase type-2 alpha from Mus musculus (Mouse).